Consider the following 197-residue polypeptide: Ras-related protein RabG2 (197 aa).

Residues glycine 13 to threonine 20, aspartate 61 to glutamine 65, and asparagine 119 to aspartate 122 each bind GTP. The disordered stretch occupies residues serine 175–cysteine 197. A lipid anchor (S-geranylgeranyl cysteine) is attached at cysteine 197.

Belongs to the small GTPase superfamily. Rab family.

The protein resides in the cell membrane. This is Ras-related protein RabG2 (rabG2) from Dictyostelium discoideum (Social amoeba).